A 102-amino-acid polypeptide reads, in one-letter code: Small ribosomal subunit protein uS10 (102 aa).

Belongs to the universal ribosomal protein uS10 family. As to quaternary structure, part of the 30S ribosomal subunit.

Its function is as follows. Involved in the binding of tRNA to the ribosomes. This chain is Small ribosomal subunit protein uS10, found in Lactobacillus delbrueckii subsp. bulgaricus (strain ATCC 11842 / DSM 20081 / BCRC 10696 / JCM 1002 / NBRC 13953 / NCIMB 11778 / NCTC 12712 / WDCM 00102 / Lb 14).